The sequence spans 189 residues: Coatomer subunit zeta (189 aa).

This sequence belongs to the adaptor complexes small subunit family. In terms of assembly, oligomeric complex that consists of at least the alpha, beta, beta', gamma, delta, epsilon and zeta subunits.

It localises to the cytoplasm. The protein localises to the golgi apparatus membrane. Its subcellular location is the cytoplasmic vesicle. The protein resides in the COPI-coated vesicle membrane. The coatomer is a cytosolic protein complex that binds to dilysine motifs and reversibly associates with Golgi non-clathrin-coated vesicles, which further mediate biosynthetic protein transport from the ER, via the Golgi up to the trans Golgi network. Coatomer complex is required for budding from Golgi membranes, and is essential for the retrograde Golgi-to-ER transport of dilysine-tagged proteins. The zeta subunit may be involved in regulating the coat assembly and, hence, the rate of biosynthetic protein transport due to its association-dissociation properties with the coatomer complex. In Saccharomyces cerevisiae (strain ATCC 204508 / S288c) (Baker's yeast), this protein is Coatomer subunit zeta (RET3).